The sequence spans 486 residues: Maternal protein exuperantia (486 aa).

Disordered stretches follow at residues 202 to 233 (NARVDNDNEADSNSSSADKHVKNGLQKERDEF) and 386 to 477 (STIR…ISLP). Basic and acidic residues predominate over residues 218-233 (ADKHVKNGLQKERDEF). A compositionally biased stretch (basic residues) spans 387–397 (TIRRRNKRNTP). Polar residues-rich tracts occupy residues 420-437 (KSQSVSSVPDSTTKTPSP) and 464-476 (SALNNTAPASISL).

Functionally, ensures the proper localization of the mRNA of the bicoid gene to the anterior regions of the oocyte thus playing a fundamental role in the establishment of the polarity of the oocyte. May bind the bcd mRNA. This Drosophila virilis (Fruit fly) protein is Maternal protein exuperantia (exu).